Here is a 215-residue protein sequence, read N- to C-terminus: MPYRLYQEEKQKAVNILNDIKVKLYNRGWFPATSGNLSYKLHDDPLYFAITSSGKDKGTVTHEDVIFVDKDAKPIEKTKLKPSAETKVHSQIYQRTDAGCVIHIHTVNNNFISQLYFEDGYVPIKDMEMIKALDIWKEDAFIKVPIIENFFDLDRLAEEAGKSINPEVPGLLIRNHGIYAWGRDEFEAKRHVEAFEFIFEYMRNMIIFKGCKDIF.

Zn(2+) is bound by residues H103 and H105.

Belongs to the aldolase class II family. MtnB subfamily. Zn(2+) serves as cofactor.

The enzyme catalyses 5-(methylsulfanyl)-D-ribulose 1-phosphate = 5-methylsulfanyl-2,3-dioxopentyl phosphate + H2O. It functions in the pathway amino-acid biosynthesis; L-methionine biosynthesis via salvage pathway; L-methionine from S-methyl-5-thio-alpha-D-ribose 1-phosphate: step 2/6. In terms of biological role, catalyzes the dehydration of methylthioribulose-1-phosphate (MTRu-1-P) into 2,3-diketo-5-methylthiopentyl-1-phosphate (DK-MTP-1-P). This Persephonella marina (strain DSM 14350 / EX-H1) protein is Methylthioribulose-1-phosphate dehydratase.